An 878-amino-acid chain; its full sequence is Probable LRR receptor-like serine/threonine-protein kinase MEE39 (878 aa).

An N-terminal signal peptide occupies residues 1–25 (MKNLCWVFLSLFWFGVFLIIRFAEG). Residues 26–514 (QNQEGFISLD…IDKPKKKVAV (489 aa)) are Extracellular-facing. N-linked (GlcNAc...) asparagine glycosylation is found at Asn-183, Asn-203, Asn-235, Asn-290, Asn-404, Asn-418, Asn-445, and Asn-466. LRR repeat units lie at residues 413–436 (RIISLNLSSSGLSGTIVSNFQNLA), 437–458 (HLESLDLSNNSLSGIVPEFLAT), and 461–483 (SLLVINLSGNKLSGAIPQALRDR). The helical transmembrane segment at 515–535 (KVVAPVASIAAIVVVILLFVF) threads the bilayer. Over 536–878 (KKKMSSRNKP…FDTDVKPKAR (343 aa)) the chain is Cytoplasmic. Residue Thr-557 is modified to Phosphothreonine. The region spanning 566 to 840 (KNLQRPLGEG…QVIINLKECL (275 aa)) is the Protein kinase domain. ATP is bound by residues 572-580 (LGEGGFGVV) and Lys-594. Phosphotyrosine is present on Tyr-639. Asp-691 functions as the Proton acceptor in the catalytic mechanism. Phosphoserine is present on Ser-726. Phosphothreonine is present on residues Thr-727 and Thr-732. Tyr-740 bears the Phosphotyrosine mark. Residues 849–869 (RNNQNMDSGHSSDQLNVTVTF) show a composition bias toward polar residues. The segment at 849-878 (RNNQNMDSGHSSDQLNVTVTFDTDVKPKAR) is disordered.

It belongs to the protein kinase superfamily. Ser/Thr protein kinase family.

The protein localises to the membrane. The enzyme catalyses L-seryl-[protein] + ATP = O-phospho-L-seryl-[protein] + ADP + H(+). The catalysed reaction is L-threonyl-[protein] + ATP = O-phospho-L-threonyl-[protein] + ADP + H(+). Its function is as follows. Receptor-like serine/threonine-kinase required during the endosperm development in seeds. The polypeptide is Probable LRR receptor-like serine/threonine-protein kinase MEE39 (MEE39) (Arabidopsis thaliana (Mouse-ear cress)).